Here is a 330-residue protein sequence, read N- to C-terminus: tRNA N6-adenosine threonylcarbamoyltransferase (330 aa).

Fe cation contacts are provided by histidine 110 and histidine 114. Substrate contacts are provided by residues 133 to 137 (MVSGG), aspartate 166, glycine 179, aspartate 183, and asparagine 271. Aspartate 299 serves as a coordination point for Fe cation.

Belongs to the KAE1 / TsaD family. Fe(2+) is required as a cofactor.

The protein localises to the cytoplasm. The catalysed reaction is L-threonylcarbamoyladenylate + adenosine(37) in tRNA = N(6)-L-threonylcarbamoyladenosine(37) in tRNA + AMP + H(+). Its function is as follows. Required for the formation of a threonylcarbamoyl group on adenosine at position 37 (t(6)A37) in tRNAs that read codons beginning with adenine. Is involved in the transfer of the threonylcarbamoyl moiety of threonylcarbamoyl-AMP (TC-AMP) to the N6 group of A37, together with TsaE and TsaB. TsaD likely plays a direct catalytic role in this reaction. This is tRNA N6-adenosine threonylcarbamoyltransferase from Thermosipho africanus (strain TCF52B).